The sequence spans 524 residues: Ribose import ATP-binding protein RbsA (524 aa).

ABC transporter domains are found at residues leucine 17–isoleucine 252 and isoleucine 263–valine 505. Glycine 49–serine 56 serves as a coordination point for ATP.

Belongs to the ABC transporter superfamily. Ribose importer (TC 3.A.1.2.1) family. The complex is composed of an ATP-binding protein (RbsA), two transmembrane proteins (RbsC) and a solute-binding protein (RbsB).

It is found in the cell membrane. The catalysed reaction is D-ribose(out) + ATP + H2O = D-ribose(in) + ADP + phosphate + H(+). In terms of biological role, part of the ABC transporter complex RbsABC involved in ribose import. Responsible for energy coupling to the transport system. This Corynebacterium glutamicum (strain ATCC 13032 / DSM 20300 / JCM 1318 / BCRC 11384 / CCUG 27702 / LMG 3730 / NBRC 12168 / NCIMB 10025 / NRRL B-2784 / 534) protein is Ribose import ATP-binding protein RbsA.